The sequence spans 391 residues: Lipid-A-disaccharide synthase (391 aa).

Belongs to the LpxB family.

The enzyme catalyses a lipid X + a UDP-2-N,3-O-bis[(3R)-3-hydroxyacyl]-alpha-D-glucosamine = a lipid A disaccharide + UDP + H(+). The protein operates within bacterial outer membrane biogenesis; LPS lipid A biosynthesis. Condensation of UDP-2,3-diacylglucosamine and 2,3-diacylglucosamine-1-phosphate to form lipid A disaccharide, a precursor of lipid A, a phosphorylated glycolipid that anchors the lipopolysaccharide to the outer membrane of the cell. The polypeptide is Lipid-A-disaccharide synthase (Azoarcus sp. (strain BH72)).